A 52-amino-acid chain; its full sequence is MFRWAIIFAVIALIASLLGFGGVAGLSKDFAVILLVIAVILAVIGFISRGRT.

Transmembrane regions (helical) follow at residues 6–26 (IIFA…VAGL) and 30–50 (FAVI…ISRG).

This sequence belongs to the UPF0391 family.

It is found in the cell membrane. The protein is UPF0391 membrane protein ABAYE0050 of Acinetobacter baumannii (strain AYE).